We begin with the raw amino-acid sequence, 1077 residues long: Zinc finger protein 518B (1077 aa).

Positions 9 to 30 (YTTQVNGGPSSLTMSPKQPNRA) are enriched in polar residues. The segment at 9-35 (YTTQVNGGPSSLTMSPKQPNRATRTER) is disordered. 2 C2H2-type zinc fingers span residues 160–182 (FICS…LVKH) and 188–211 (YRCE…RRVH). The tract at residues 372-397 (TSRGDGGTSECLSTEKGSGGQKKMLS) is disordered. K479 participates in a covalent cross-link: Glycyl lysine isopeptide (Lys-Gly) (interchain with G-Cter in SUMO2). 4 disordered regions span residues 561–585 (LVSS…GQVS), 599–622 (GEDK…ETAG), 675–739 (KPSS…GSRQ), and 825–852 (QPLT…RKED). A compositionally biased stretch (basic and acidic residues) spans 564–574 (SDRKLEDKQME). 2 stretches are compositionally biased toward polar residues: residues 605 to 621 (SQQP…SETA) and 675 to 688 (KPSS…QRRS). Glycyl lysine isopeptide (Lys-Gly) (interchain with G-Cter in SUMO2) cross-links involve residues K847 and K861. The interval 895 to 914 (QVNSTKKKNKMQANPGRYFK) is disordered. The C2H2-type 3 zinc finger occupies 1039-1061 (FKCWFCGRLYEDQEEWMSHGQRH).

Belongs to the krueppel C2H2-type zinc-finger protein family.

It localises to the nucleus. In terms of biological role, through its association with the EHMT1-EHMT2/G9A and PRC2/EED-EZH2 histone methyltransferase complexes may function in gene silencing, regulating repressive post-translational methylation of histone tails at promoters of target genes. This chain is Zinc finger protein 518B (Znf518b), found in Mus musculus (Mouse).